The following is a 167-amino-acid chain: Homing endonuclease I-ApeII (167 aa).

It belongs to the LAGLIDADG endonuclease family.

Functionally, endonuclease involved in rRNA intron I-gamma homing. The polypeptide is Homing endonuclease I-ApeII (apeII) (Aeropyrum pernix (strain ATCC 700893 / DSM 11879 / JCM 9820 / NBRC 100138 / K1)).